Reading from the N-terminus, the 322-residue chain is Probable cAMP-dependent protein kinase catalytic subunit (322 aa).

In terms of domain architecture, Protein kinase spans 7–261 (FEFVKVVGVG…ICEIMGHPFF (255 aa)). Residues 13-21 (VGVGAFGKV) and Lys-37 each bind ATP. Asp-132 (proton acceptor) is an active-site residue. An AGC-kinase C-terminal domain is found at 262–322 (KGIDWHEVES…KHLYKVSKGL (61 aa)).

This sequence belongs to the protein kinase superfamily. AGC Ser/Thr protein kinase family. cAMP subfamily.

It carries out the reaction L-seryl-[protein] + ATP = O-phospho-L-seryl-[protein] + ADP + H(+). The catalysed reaction is L-threonyl-[protein] + ATP = O-phospho-L-threonyl-[protein] + ADP + H(+). The chain is Probable cAMP-dependent protein kinase catalytic subunit from Encephalitozoon cuniculi (strain GB-M1) (Microsporidian parasite).